Here is a 255-residue protein sequence, read N- to C-terminus: MNTARLNQGTPLLLNAVSKHYAENIVLNQLDLHIPAGQFVAVVGRSGGGKSTLLRLLAGLETPTAGDVLAGTTPLAEIQEDTRMMFQDARLLPWKSVIDNVGLGLKGQWRDAARRALAAVGLENRAGEWPAALSGGQKQRVALARALIHRPGLLLLDEPLGALDALTRLEMQDLIVSLWQEHGFTVLLVTHDVSEAVAMADRVLLIEEGKIGLDLTVDIPRPRRLGSVRLAELEAEVLQRVMQRGESETRLRKQG.

In terms of domain architecture, ABC transporter spans 12-233 (LLLNAVSKHY…RLGSVRLAEL (222 aa)). Residue 44–51 (GRSGGGKS) coordinates ATP.

Belongs to the ABC transporter superfamily. Aliphatic sulfonates importer (TC 3.A.1.17.2) family. In terms of assembly, the complex is composed of two ATP-binding proteins (SsuB), two transmembrane proteins (SsuC) and a solute-binding protein (SsuA).

It localises to the cell inner membrane. It catalyses the reaction ATP + H2O + aliphatic sulfonate-[sulfonate-binding protein]Side 1 = ADP + phosphate + aliphatic sulfonateSide 2 + [sulfonate-binding protein]Side 1.. Its function is as follows. Part of the ABC transporter complex SsuABC involved in aliphatic sulfonates import. Responsible for energy coupling to the transport system. This is Aliphatic sulfonates import ATP-binding protein SsuB from Escherichia coli (strain K12).